Here is a 158-residue protein sequence, read N- to C-terminus: 2-C-methyl-D-erythritol 2,4-cyclodiphosphate synthase (158 aa).

Residues Asp9 and His11 each coordinate a divalent metal cation. Residues 9 to 11 (DAH) and 35 to 36 (HS) contribute to the 4-CDP-2-C-methyl-D-erythritol 2-phosphate site. An a divalent metal cation-binding site is contributed by His43. 4-CDP-2-C-methyl-D-erythritol 2-phosphate-binding positions include 57–59 (DIG), 62–66 (FPDTD), 133–136 (TTTE), Phe140, and Arg143.

The protein belongs to the IspF family. Homotrimer. Requires a divalent metal cation as cofactor.

The catalysed reaction is 4-CDP-2-C-methyl-D-erythritol 2-phosphate = 2-C-methyl-D-erythritol 2,4-cyclic diphosphate + CMP. It participates in isoprenoid biosynthesis; isopentenyl diphosphate biosynthesis via DXP pathway; isopentenyl diphosphate from 1-deoxy-D-xylulose 5-phosphate: step 4/6. Its function is as follows. Involved in the biosynthesis of isopentenyl diphosphate (IPP) and dimethylallyl diphosphate (DMAPP), two major building blocks of isoprenoid compounds. Catalyzes the conversion of 4-diphosphocytidyl-2-C-methyl-D-erythritol 2-phosphate (CDP-ME2P) to 2-C-methyl-D-erythritol 2,4-cyclodiphosphate (ME-CPP) with a corresponding release of cytidine 5-monophosphate (CMP). The protein is 2-C-methyl-D-erythritol 2,4-cyclodiphosphate synthase of Methylococcus capsulatus (strain ATCC 33009 / NCIMB 11132 / Bath).